We begin with the raw amino-acid sequence, 55 residues long: Large ribosomal subunit protein bL33 (55 aa).

It belongs to the bacterial ribosomal protein bL33 family.

In Aliivibrio fischeri (strain ATCC 700601 / ES114) (Vibrio fischeri), this protein is Large ribosomal subunit protein bL33.